A 351-amino-acid chain; its full sequence is Biotin synthase (351 aa).

A Radical SAM core domain is found at 48–265 (NKVRIHILDN…LCMFRLINPD (218 aa)). Cys63, Cys67, and Cys70 together coordinate [4Fe-4S] cluster. [2Fe-2S] cluster is bound by residues Cys107, Cys139, Cys199, and Arg269.

This sequence belongs to the radical SAM superfamily. Biotin synthase family. Homodimer. [4Fe-4S] cluster serves as cofactor. [2Fe-2S] cluster is required as a cofactor.

The catalysed reaction is (4R,5S)-dethiobiotin + (sulfur carrier)-SH + 2 reduced [2Fe-2S]-[ferredoxin] + 2 S-adenosyl-L-methionine = (sulfur carrier)-H + biotin + 2 5'-deoxyadenosine + 2 L-methionine + 2 oxidized [2Fe-2S]-[ferredoxin]. It functions in the pathway cofactor biosynthesis; biotin biosynthesis; biotin from 7,8-diaminononanoate: step 2/2. In terms of biological role, catalyzes the conversion of dethiobiotin (DTB) to biotin by the insertion of a sulfur atom into dethiobiotin via a radical-based mechanism. This Leptospira interrogans serogroup Icterohaemorrhagiae serovar copenhageni (strain Fiocruz L1-130) protein is Biotin synthase.